A 427-amino-acid chain; its full sequence is Enolase 2 (427 aa).

Gln163 provides a ligand contact to (2R)-2-phosphoglycerate. Glu205 serves as the catalytic Proton donor. Mg(2+) is bound by residues Asp242, Glu285, and Asp312. Residues Lys337, Arg366, Ser367, and Lys388 each coordinate (2R)-2-phosphoglycerate. Residue Lys337 is the Proton acceptor of the active site.

This sequence belongs to the enolase family. Component of the RNA degradosome, a multiprotein complex involved in RNA processing and mRNA degradation. The cofactor is Mg(2+).

Its subcellular location is the cytoplasm. The protein resides in the secreted. It localises to the cell surface. It catalyses the reaction (2R)-2-phosphoglycerate = phosphoenolpyruvate + H2O. It functions in the pathway carbohydrate degradation; glycolysis; pyruvate from D-glyceraldehyde 3-phosphate: step 4/5. In terms of biological role, catalyzes the reversible conversion of 2-phosphoglycerate (2-PG) into phosphoenolpyruvate (PEP). It is essential for the degradation of carbohydrates via glycolysis. In Methylococcus capsulatus (strain ATCC 33009 / NCIMB 11132 / Bath), this protein is Enolase 2.